A 267-amino-acid chain; its full sequence is Orotidine 5'-phosphate decarboxylase (267 aa).

Substrate-binding positions include Asp40, 62 to 64, 93 to 102, Tyr215, and Arg234; these read KTH and DRKFADIGNT. Lys95 acts as the Proton donor in catalysis.

It belongs to the OMP decarboxylase family.

It catalyses the reaction orotidine 5'-phosphate + H(+) = UMP + CO2. Its pathway is pyrimidine metabolism; UMP biosynthesis via de novo pathway; UMP from orotate: step 2/2. The sequence is that of Orotidine 5'-phosphate decarboxylase (pyrG) from Phycomyces blakesleeanus (strain ATCC 8743b / DSM 1359 / FGSC 10004 / NBRC 33097 / NRRL 1555).